A 598-amino-acid chain; its full sequence is uncharacterized protein (598 aa).

Residues Asp-397, Asp-408, Glu-506, and Glu-520 each contribute to the Mn(2+) site.

The protein belongs to the peptidase M24B family. It depends on Mn(2+) as a cofactor.

This is an uncharacterized protein from Schizosaccharomyces pombe (strain 972 / ATCC 24843) (Fission yeast).